The sequence spans 434 residues: Nuclear distribution protein PAC1 (434 aa).

The LisH domain maps to 8–40 (QKDDLHKAMLDYLYANNHTAAFNALKESAGITY). A coiled-coil region spans residues 57-83 (TSVIRLQKKIMELENRNAALQEELSMS). WD repeat units follow at residues 106 to 147 (GHRA…RTLK), 149 to 187 (HTKPVNDLDFDHKGHLLVTCSSDLFIKIWDSQNEWKNTK), 191 to 230 (GHDHAVSAVRFMPGDQLIVSASRDRTIRVFDVASTHQVRT), 233 to 272 (GHSEWVRCVIPSADGTMLASGSKDQTVRLWDPLTGEPKSE), 275 to 334 (GHEN…MIRN), 337 to 378 (GHDN…RIVE), and 401 to 434 (KKVNGVDSVDAEPEKVVNVVATGSVDETIKIWLP).

This sequence belongs to the WD repeat LIS1/nudF family. Self-associates. Interacts with NDL1 and dynein.

It localises to the cytoplasm. Its subcellular location is the cytoskeleton. The protein resides in the spindle pole. Positively regulates the activity of the minus-end directed microtubule motor protein dynein. May enhance dynein-mediated microtubule sliding by targeting dynein to the microtubule plus end. Required for nuclear migration during vegetative growth as well as development. Required for retrograde early endosome (EE) transport from the hyphal tip. Required for localization of dynein to the mitotic spindle poles. Recruits additional proteins to the dynein complex at SPBs. The protein is Nuclear distribution protein PAC1 of Coprinopsis cinerea (strain Okayama-7 / 130 / ATCC MYA-4618 / FGSC 9003) (Inky cap fungus).